A 511-amino-acid polypeptide reads, in one-letter code: ATP synthase subunit alpha (511 aa).

Position 170 to 177 (170 to 177) interacts with ATP; sequence GDRQTGKT.

The protein belongs to the ATPase alpha/beta chains family. F-type ATPases have 2 components, CF(1) - the catalytic core - and CF(0) - the membrane proton channel. CF(1) has five subunits: alpha(3), beta(3), gamma(1), delta(1), epsilon(1). CF(0) has three main subunits: a(1), b(2) and c(9-12). The alpha and beta chains form an alternating ring which encloses part of the gamma chain. CF(1) is attached to CF(0) by a central stalk formed by the gamma and epsilon chains, while a peripheral stalk is formed by the delta and b chains.

The protein resides in the cell inner membrane. The enzyme catalyses ATP + H2O + 4 H(+)(in) = ADP + phosphate + 5 H(+)(out). Produces ATP from ADP in the presence of a proton gradient across the membrane. The alpha chain is a regulatory subunit. The protein is ATP synthase subunit alpha of Granulibacter bethesdensis (strain ATCC BAA-1260 / CGDNIH1).